The following is a 441-amino-acid chain: tRNA-2-methylthio-N(6)-dimethylallyladenosine synthase (441 aa).

Residues Lys3–Gln119 enclose the MTTase N-terminal domain. [4Fe-4S] cluster-binding residues include Cys12, Cys48, Cys82, Cys155, Cys159, and Cys162. The Radical SAM core domain occupies Arg141–Glu371. Residues Gly374–Asp437 form the TRAM domain.

This sequence belongs to the methylthiotransferase family. MiaB subfamily. Monomer. It depends on [4Fe-4S] cluster as a cofactor.

The protein resides in the cytoplasm. It catalyses the reaction N(6)-dimethylallyladenosine(37) in tRNA + (sulfur carrier)-SH + AH2 + 2 S-adenosyl-L-methionine = 2-methylsulfanyl-N(6)-dimethylallyladenosine(37) in tRNA + (sulfur carrier)-H + 5'-deoxyadenosine + L-methionine + A + S-adenosyl-L-homocysteine + 2 H(+). Functionally, catalyzes the methylthiolation of N6-(dimethylallyl)adenosine (i(6)A), leading to the formation of 2-methylthio-N6-(dimethylallyl)adenosine (ms(2)i(6)A) at position 37 in tRNAs that read codons beginning with uridine. In Prosthecochloris aestuarii (strain DSM 271 / SK 413), this protein is tRNA-2-methylthio-N(6)-dimethylallyladenosine synthase.